The chain runs to 209 residues: Thiamine-phosphate synthase (209 aa).

Residues 36-40 (QLRDK) and Asn-68 contribute to the 4-amino-2-methyl-5-(diphosphooxymethyl)pyrimidine site. Positions 69 and 88 each coordinate Mg(2+). Ser-107 is a binding site for 4-amino-2-methyl-5-(diphosphooxymethyl)pyrimidine. A 2-[(2R,5Z)-2-carboxy-4-methylthiazol-5(2H)-ylidene]ethyl phosphate-binding site is contributed by 133 to 135 (TNS). Lys-136 is a binding site for 4-amino-2-methyl-5-(diphosphooxymethyl)pyrimidine. 2-[(2R,5Z)-2-carboxy-4-methylthiazol-5(2H)-ylidene]ethyl phosphate is bound by residues Gly-164 and 184–185 (IT).

Belongs to the thiamine-phosphate synthase family. Mg(2+) is required as a cofactor.

The enzyme catalyses 2-[(2R,5Z)-2-carboxy-4-methylthiazol-5(2H)-ylidene]ethyl phosphate + 4-amino-2-methyl-5-(diphosphooxymethyl)pyrimidine + 2 H(+) = thiamine phosphate + CO2 + diphosphate. It catalyses the reaction 2-(2-carboxy-4-methylthiazol-5-yl)ethyl phosphate + 4-amino-2-methyl-5-(diphosphooxymethyl)pyrimidine + 2 H(+) = thiamine phosphate + CO2 + diphosphate. The catalysed reaction is 4-methyl-5-(2-phosphooxyethyl)-thiazole + 4-amino-2-methyl-5-(diphosphooxymethyl)pyrimidine + H(+) = thiamine phosphate + diphosphate. It participates in cofactor biosynthesis; thiamine diphosphate biosynthesis; thiamine phosphate from 4-amino-2-methyl-5-diphosphomethylpyrimidine and 4-methyl-5-(2-phosphoethyl)-thiazole: step 1/1. Functionally, condenses 4-methyl-5-(beta-hydroxyethyl)thiazole monophosphate (THZ-P) and 2-methyl-4-amino-5-hydroxymethyl pyrimidine pyrophosphate (HMP-PP) to form thiamine monophosphate (TMP). This is Thiamine-phosphate synthase from Shouchella clausii (strain KSM-K16) (Alkalihalobacillus clausii).